A 411-amino-acid chain; its full sequence is Imidazolonepropionase (411 aa).

The Fe(3+) site is built by His-75 and His-77. The Zn(2+) site is built by His-75 and His-77. 4-imidazolone-5-propanoate contacts are provided by Arg-84, Tyr-147, and His-180. Tyr-147 provides a ligand contact to N-formimidoyl-L-glutamate. Residue His-245 coordinates Fe(3+). His-245 is a Zn(2+) binding site. Residue Gln-248 coordinates 4-imidazolone-5-propanoate. Asp-320 is a Fe(3+) binding site. Zn(2+) is bound at residue Asp-320. N-formimidoyl-L-glutamate is bound by residues Asn-322 and Gly-324. Residue Thr-325 participates in 4-imidazolone-5-propanoate binding.

This sequence belongs to the metallo-dependent hydrolases superfamily. HutI family. Zn(2+) serves as cofactor. Fe(3+) is required as a cofactor.

The protein localises to the cytoplasm. The enzyme catalyses 4-imidazolone-5-propanoate + H2O = N-formimidoyl-L-glutamate. It functions in the pathway amino-acid degradation; L-histidine degradation into L-glutamate; N-formimidoyl-L-glutamate from L-histidine: step 3/3. Functionally, catalyzes the hydrolytic cleavage of the carbon-nitrogen bond in imidazolone-5-propanoate to yield N-formimidoyl-L-glutamate. It is the third step in the universal histidine degradation pathway. The protein is Imidazolonepropionase of Photobacterium profundum (strain SS9).